A 345-amino-acid polypeptide reads, in one-letter code: Anthranilate phosphoribosyltransferase (345 aa).

Residues G84, 87 to 88 (GD), T92, 94 to 97 (NIST), 112 to 120 (KHGNRSVSS), and S124 contribute to the 5-phospho-alpha-D-ribose 1-diphosphate site. G84 serves as a coordination point for anthranilate. Residue S96 participates in Mg(2+) binding. N115 is an anthranilate binding site. R170 contacts anthranilate. Positions 229 and 230 each coordinate Mg(2+).

It belongs to the anthranilate phosphoribosyltransferase family. Homodimer. Requires Mg(2+) as cofactor.

The catalysed reaction is N-(5-phospho-beta-D-ribosyl)anthranilate + diphosphate = 5-phospho-alpha-D-ribose 1-diphosphate + anthranilate. It participates in amino-acid biosynthesis; L-tryptophan biosynthesis; L-tryptophan from chorismate: step 2/5. Functionally, catalyzes the transfer of the phosphoribosyl group of 5-phosphorylribose-1-pyrophosphate (PRPP) to anthranilate to yield N-(5'-phosphoribosyl)-anthranilate (PRA). This chain is Anthranilate phosphoribosyltransferase, found in Xanthomonas campestris pv. campestris (strain 8004).